We begin with the raw amino-acid sequence, 409 residues long: MECALDAQSLISISLRKIHSSRTQRGGIKLHKNLLVSYVLRNARQLYLSERYAELYRRQQQQQQQQQQPPHHQHQHLAYAAPGMPASAADFGPLQLGGGGDAEAREPVARHQLHQLHQLHQLHLQQQLHQHQHPAPRGCTAAAPVAVAGAPAGCAGALSELPGCAALQPPHGAPHRGQHLEPLQPGPAPLPPPAPAALCPRDPRVPAACSAPSAPPGAAPPTVAASSPPASPAPSSSPGFYRGAYPAPSDFGVHCSSQTTVLDLDTHVVTTVENGYLHQDCCASAHCPCCGQGAPGPGLASAAGCKRKYYPGQEEEDDEEEDAGDLGAEPPGGTPFAPCKRARFEDFCPDSSPDASNISNLISIFGSGFSGLVSRQPDSSEQPPPLNGQLCAKQALASLGAWTRAIVAF.

2 disordered regions span residues 168-237 and 312-335; these read QPPH…PSSS and GQEEEDDEEEDAGDLGAEPPGGTP. Residues 184–195 are compositionally biased toward pro residues; sequence QPGPAPLPPPAP. 2 stretches are compositionally biased toward low complexity: residues 196–212 and 220–237; these read AALCPRDPRVPAACSAP and PPTVAASSPPASPAPSSS. The segment covering 313–324 has biased composition (acidic residues); that stretch reads QEEEDDEEEDAG.

Belongs to the IER family.

This is Immediate early response gene 5-like protein (Ier5l) from Rattus norvegicus (Rat).